We begin with the raw amino-acid sequence, 273 residues long: Alcohol dehydrogenase-related 31 kDa protein (273 aa).

11–34 (YVADCGGIALETCKVLMTKNIAKL) contributes to the NAD(+) binding site. Residue Ser-139 participates in substrate binding. Tyr-152 serves as the catalytic Proton acceptor.

This sequence belongs to the short-chain dehydrogenases/reductases (SDR) family.

This Drosophila immigrans (Fruit fly) protein is Alcohol dehydrogenase-related 31 kDa protein (Adhr).